Consider the following 253-residue polypeptide: 5'-nucleotidase SurE (253 aa).

Aspartate 8, aspartate 9, serine 39, and asparagine 96 together coordinate a divalent metal cation.

The protein belongs to the SurE nucleotidase family. A divalent metal cation is required as a cofactor.

Its subcellular location is the cytoplasm. It carries out the reaction a ribonucleoside 5'-phosphate + H2O = a ribonucleoside + phosphate. Functionally, nucleotidase that shows phosphatase activity on nucleoside 5'-monophosphates. This Rhodopirellula baltica (strain DSM 10527 / NCIMB 13988 / SH1) protein is 5'-nucleotidase SurE.